Consider the following 342-residue polypeptide: Mitogen-activated protein kinase kinase kinase 20 (342 aa).

In terms of domain architecture, Protein kinase spans 3–268; it reads WVRGETIGFG…AEMLLNHSFV (266 aa). 9–17 provides a ligand contact to ATP; that stretch reads IGFGTFSTV. Ser-18 carries the phosphoserine modification. Position 19 is a phosphothreonine (Thr-19). Lys-36 provides a ligand contact to ATP. Phosphotyrosine occurs at positions 41 and 66. A phosphoserine mark is found at Ser-93 and Ser-114. The Proton acceptor role is filled by Asp-131. Residues 285–342 are required for MKK3 binding; the sequence is KDEDKVLMSPKCPFEFDDWDSFTLDSNPSFDSPVERLGSLVSGSIPDWSVGGSWLTVR.

It belongs to the protein kinase superfamily. Ser/Thr protein kinase family. In terms of assembly, interacts with MKK3 and MPK18 via its C-terminal domain. Binds to MKK5. Autophosphorylates; active in phosphorylated state. Dephosphorylated by ABI1. Expressed in roots, seedlings, leaves, flower buds, flowers and siliques.

Its subcellular location is the nucleus. It localises to the cytoplasm. It carries out the reaction L-seryl-[protein] + ATP = O-phospho-L-seryl-[protein] + ADP + H(+). The catalysed reaction is L-threonyl-[protein] + ATP = O-phospho-L-threonyl-[protein] + ADP + H(+). Activated through serine, threonine and tyrosine phosphorylation, especially upon abscisic acid (ABA) treatment. Restricted activity by ABI1-mediated dephosphorylation. Its function is as follows. Mitogen-activated protein kinase kinase (MAPKK) that phosphorylates both MKK3 and MPK18 and regulate two separate signaling pathways involved in root microtubule functions. MAPKK which regulates abscisic acid (ABA) responses in a MAPKKK20-MKK5-MPK6 cascade involved in root growth (e.g. root cell division and elongation) and stomatal response, probably via MKK5 activation by protein phosphorylation and subsequent activation of MAPK6 by MKK5. Involved in various abiotic stresses (e.g. osmotic stress, cold and hydrogen peroxide) responses by phosphorylating and thus regulating MPK6 activity, in an ABA-independent manner. In Arabidopsis thaliana (Mouse-ear cress), this protein is Mitogen-activated protein kinase kinase kinase 20.